The chain runs to 261 residues: Cytochrome c oxidase subunit 3 (261 aa).

Topologically, residues 1–15 (MTHQTHAYHMVNPSP) are mitochondrial matrix. The helical transmembrane segment at 16-34 (WPLTGALSALLMTSGLIMW) threads the bilayer. Residues 35-40 (FHYNSM) lie on the Mitochondrial intermembrane side of the membrane. A helical membrane pass occupies residues 41 to 66 (SLLTLGFTTNLLTMYQWWRDVIREGT). Residues 67-72 (FQGHHT) lie on the Mitochondrial matrix side of the membrane. Residues 73 to 105 (PIVQKGLRYGMVLFIVSEVFFFAGFFWAFYHSS) traverse the membrane as a helical segment. Over 106-128 (LAPTPELGGCWPPTGIIPLNPLE) the chain is Mitochondrial intermembrane. A helical transmembrane segment spans residues 129-152 (VPLLNTSVLLASGVSITWAHHSLM). At 153-155 (EGN) the chain is on the mitochondrial matrix side. Residues 156 to 183 (RKHMLQALFITISLGVYFTLLQASEYYE) form a helical membrane-spanning segment. Residues 184 to 190 (TSFTISD) lie on the Mitochondrial intermembrane side of the membrane. A helical membrane pass occupies residues 191 to 223 (GVYGSTFFMATGFHGLHVIIGSTFLIVCFLRQL). Residues 224–232 (YYHFTSNHH) lie on the Mitochondrial matrix side of the membrane. A helical membrane pass occupies residues 233 to 256 (FGFEAAAWYWHFVDVVWLFLYVSI). At 257–261 (YWWGS) the chain is on the mitochondrial intermembrane side.

The protein belongs to the cytochrome c oxidase subunit 3 family. As to quaternary structure, component of the cytochrome c oxidase (complex IV, CIV), a multisubunit enzyme composed of 14 subunits. The complex is composed of a catalytic core of 3 subunits MT-CO1, MT-CO2 and MT-CO3, encoded in the mitochondrial DNA, and 11 supernumerary subunits COX4I, COX5A, COX5B, COX6A, COX6B, COX6C, COX7A, COX7B, COX7C, COX8 and NDUFA4, which are encoded in the nuclear genome. The complex exists as a monomer or a dimer and forms supercomplexes (SCs) in the inner mitochondrial membrane with NADH-ubiquinone oxidoreductase (complex I, CI) and ubiquinol-cytochrome c oxidoreductase (cytochrome b-c1 complex, complex III, CIII), resulting in different assemblies (supercomplex SCI(1)III(2)IV(1) and megacomplex MCI(2)III(2)IV(2)).

The protein resides in the mitochondrion inner membrane. It carries out the reaction 4 Fe(II)-[cytochrome c] + O2 + 8 H(+)(in) = 4 Fe(III)-[cytochrome c] + 2 H2O + 4 H(+)(out). Its function is as follows. Component of the cytochrome c oxidase, the last enzyme in the mitochondrial electron transport chain which drives oxidative phosphorylation. The respiratory chain contains 3 multisubunit complexes succinate dehydrogenase (complex II, CII), ubiquinol-cytochrome c oxidoreductase (cytochrome b-c1 complex, complex III, CIII) and cytochrome c oxidase (complex IV, CIV), that cooperate to transfer electrons derived from NADH and succinate to molecular oxygen, creating an electrochemical gradient over the inner membrane that drives transmembrane transport and the ATP synthase. Cytochrome c oxidase is the component of the respiratory chain that catalyzes the reduction of oxygen to water. Electrons originating from reduced cytochrome c in the intermembrane space (IMS) are transferred via the dinuclear copper A center (CU(A)) of subunit 2 and heme A of subunit 1 to the active site in subunit 1, a binuclear center (BNC) formed by heme A3 and copper B (CU(B)). The BNC reduces molecular oxygen to 2 water molecules using 4 electrons from cytochrome c in the IMS and 4 protons from the mitochondrial matrix. The protein is Cytochrome c oxidase subunit 3 (MT-CO3) of Canis lupus (Gray wolf).